Reading from the N-terminus, the 271-residue chain is Mannosyl-3-phosphoglycerate phosphatase (271 aa).

Residue D13 is the Nucleophile of the active site. Mg(2+)-binding residues include D13, D15, and D214.

It belongs to the HAD-like hydrolase superfamily. MPGP family. The cofactor is Mg(2+).

It is found in the cytoplasm. It carries out the reaction 2-O-(alpha-D-mannosyl)-3-phosphoglycerate + H2O = (2R)-2-O-(alpha-D-mannosyl)-glycerate + phosphate. The polypeptide is Mannosyl-3-phosphoglycerate phosphatase (yedP) (Escherichia coli O157:H7).